Consider the following 484-residue polypeptide: Maintenance of mitochondrial morphology protein 1 (484 aa).

At 1-22 (MSFQQSETVPVPAQSSLSFTQG) the chain is on the lumenal side. A helical membrane pass occupies residues 23-43 (FLLGQLSVVLLIGAFIKFFIF). The Cytoplasmic segment spans residues 44 to 484 (GEAPPPPSRG…PGSLSGAAAR (441 aa)). Disordered stretches follow at residues 50–98 (PSRG…SSST), 272–319 (STPP…TGSP), and 388–484 (RTGV…AAAR). The segment covering 54–64 (LSHRASTHRRS) has biased composition (basic residues). 2 stretches are compositionally biased toward polar residues: residues 65–78 (NSIYTINHNEANNR) and 85–98 (SNSNVLRPVPSSST). Residues 130–380 (QPESLDWFNV…EPRVQVVGLP (251 aa)) form the SMP-LTD domain. Pro residues predominate over residues 272-286 (STPPLHTPSPSPSPP). Polar residues predominate over residues 399–408 (TGSNAASRSA). The span at 413–427 (LGDHHLGDREPEGLR) shows a compositional bias: basic and acidic residues. 2 stretches are compositionally biased toward polar residues: residues 437–449 (QFDSVSRTSSYNV) and 466–476 (GALSEQFQMPG).

The protein belongs to the MMM1 family. As to quaternary structure, homodimer. Component of the ER-mitochondria encounter structure (ERMES) or MDM complex, composed of mmm1, mdm10, mdm12 and mdm34. A mmm1 homodimer associates with one molecule of mdm12 on each side in a pairwise head-to-tail manner, and the SMP-LTD domains of mmm1 and mdm12 generate a continuous hydrophobic tunnel for phospholipid trafficking.

The protein localises to the endoplasmic reticulum membrane. In terms of biological role, component of the ERMES/MDM complex, which serves as a molecular tether to connect the endoplasmic reticulum (ER) and mitochondria. Components of this complex are involved in the control of mitochondrial shape and protein biogenesis, and function in nonvesicular lipid trafficking between the ER and mitochondria. The mdm12-mmm1 subcomplex functions in the major beta-barrel assembly pathway that is responsible for biogenesis of all outer membrane beta-barrel proteins, and acts in a late step after the SAM complex. The mdm10-mdm12-mmm1 subcomplex further acts in the TOM40-specific pathway after the action of the mdm12-mmm1 complex. Essential for establishing and maintaining the structure of mitochondria and maintenance of mtDNA nucleoids. The protein is Maintenance of mitochondrial morphology protein 1 of Aspergillus niger (strain ATCC MYA-4892 / CBS 513.88 / FGSC A1513).